Reading from the N-terminus, the 469-residue chain is 6-phospho-beta-galactosidase (469 aa).

Positions 19, 116, 159, 160, and 297 each coordinate D-galactose 6-phosphate. The active-site Proton donor is the Glu-160. Glu-375 functions as the Nucleophile in the catalytic mechanism. D-galactose 6-phosphate is bound by residues Ser-428, Trp-429, Lys-435, and Tyr-437.

This sequence belongs to the glycosyl hydrolase 1 family.

It catalyses the reaction a 6-phospho-beta-D-galactoside + H2O = D-galactose 6-phosphate + an alcohol. It participates in carbohydrate metabolism; lactose degradation; D-galactose 6-phosphate and beta-D-glucose from lactose 6-phosphate: step 1/1. This is 6-phospho-beta-galactosidase from Streptococcus equi subsp. zooepidemicus (strain H70).